A 636-amino-acid polypeptide reads, in one-letter code: Chaperone protein HtpG (636 aa).

The segment at 1–345 (MSESATANAN…SSDLPLNVSR (345 aa)) is a; substrate-binding. The b stretch occupies residues 346 to 562 (EILQQSKDID…EHDPSGNLAR (217 aa)). The tract at residues 563–636 (LMKAAGQPMP…NDLMMALSAK (74 aa)) is c.

Belongs to the heat shock protein 90 family. Homodimer.

Its subcellular location is the cytoplasm. Its function is as follows. Molecular chaperone. Has ATPase activity. The sequence is that of Chaperone protein HtpG from Dechloromonas aromatica (strain RCB).